The primary structure comprises 626 residues: E3 ubiquitin-protein ligase HRD1 (626 aa).

The first 15 residues, 1-15 (MQLLLSSVCMALTSA), serve as a signal peptide directing secretion. The Lumenal segment spans residues 16 to 38 (VIGFAYYQKQQFYPAVVYITKSN). The chain crosses the membrane as a helical span at residues 39-59 (ASMGVIYIQFFVIVFMFGKLL). At 60–96 (SKIFLGTLRAAEFEHLLERFWYALTETCLAFTVFRDD) the chain is on the cytoplasmic side. A helical membrane pass occupies residues 97-117 (FNPRFVALFTVLLFLKSFHWL). Over 118-128 (AEERVDFMERS) the chain is Lumenal. The helical transmembrane segment at 129 to 149 (PVLGWLFHIRVGSLLTVLGIL) threads the bilayer. At 150-167 (DYVLLIHAYNSTLVRGPT) the chain is on the cytoplasmic side. Residues 168-188 (VQLVFGFEYAILLTVIASTAI) traverse the membrane as a helical segment. The Lumenal segment spans residues 189–222 (KYVLHAAEMRTDTPWENKAVFLLYTELVIGLIKV). The helical transmembrane segment at 223 to 243 (VLYILFVVIMAKIYALPMFVF) threads the bilayer. Residues 234–268 (KIYALPMFVFRPMFFTIRNFRKALNDVIMSRRAIR) form an interaction with p53/TP53 region. The Cytoplasmic segment spans residues 244–626 (RPMFFTIRNF…AATNERTTAE (383 aa)). The segment at 289–328 (CIICREDMVNHSKKLPCGHIFHTTCLRSWFQRQQTCPTCR) adopts an RING-type; atypical zinc-finger fold. A disordered region spans residues 569–600 (DADEDDIPSTATEAVSIPNSDADFEENSSELG). The span at 577–587 (STATEAVSIPN) shows a compositional bias: polar residues.

Belongs to the HRD1 family. In terms of assembly, homodimer. Interacts with p53. May interact with Septin2.

It localises to the endoplasmic reticulum membrane. It carries out the reaction S-ubiquitinyl-[E2 ubiquitin-conjugating enzyme]-L-cysteine + [acceptor protein]-L-lysine = [E2 ubiquitin-conjugating enzyme]-L-cysteine + N(6)-ubiquitinyl-[acceptor protein]-L-lysine.. It participates in protein modification; protein ubiquitination. Its function is as follows. Acts as an E3 ubiquitin-protein ligase which accepts ubiquitin specifically from endoplasmic reticulum-associated UBC7 E2 ligase and transfers it to substrates, promoting their degradation. Component of the endoplasmic reticulum quality control (ERQC) system also called ER-associated degradation (ERAD) involved in ubiquitin-dependent degradation of misfolded endoplasmic reticulum proteins. Also promotes the degradation of normal but naturally short-lived proteins. Protects cells from ER stress-induced apoptosis. Sequesters p53 in the cytoplasm and promotes its degradation, thereby negatively regulating its biological function in transcription, cell cycle regulation and apoptosis. The protein is E3 ubiquitin-protein ligase HRD1 (sip3) of Drosophila melanogaster (Fruit fly).